The following is a 747-amino-acid chain: Beta-glucosidase BoGH3A (747 aa).

Residues 1-26 form the signal peptide; the sequence is MIIGIMKTFLLTICFLSVQTGMVAIA. Aspartate 273 is an active-site residue.

The protein belongs to the glycosyl hydrolase 3 family.

It localises to the periplasm. It carries out the reaction Hydrolysis of terminal, non-reducing beta-D-glucosyl residues with release of beta-D-glucose.. The protein operates within glucan metabolism; xyloglucan degradation. In terms of biological role, catalyzes the hydrolysis of terminal, non-reducing beta-D-glucosyl residues with release of beta-D-glucose in xyloglucan degradation, leading to remove the backbone 'G' units. In Bacteroides ovatus (strain ATCC 8483 / DSM 1896 / JCM 5824 / BCRC 10623 / CCUG 4943 / NCTC 11153), this protein is Beta-glucosidase BoGH3A.